The primary structure comprises 182 residues: ATP synthase subunit delta (182 aa).

Belongs to the ATPase delta chain family. F-type ATPases have 2 components, F(1) - the catalytic core - and F(0) - the membrane proton channel. F(1) has five subunits: alpha(3), beta(3), gamma(1), delta(1), epsilon(1). CF(0) has four main subunits: a(1), b(1), b'(1) and c(10-14). The alpha and beta chains form an alternating ring which encloses part of the gamma chain. F(1) is attached to F(0) by a central stalk formed by the gamma and epsilon chains, while a peripheral stalk is formed by the delta, b and b' chains.

Its subcellular location is the cellular thylakoid membrane. Functionally, f(1)F(0) ATP synthase produces ATP from ADP in the presence of a proton or sodium gradient. F-type ATPases consist of two structural domains, F(1) containing the extramembraneous catalytic core and F(0) containing the membrane proton channel, linked together by a central stalk and a peripheral stalk. During catalysis, ATP synthesis in the catalytic domain of F(1) is coupled via a rotary mechanism of the central stalk subunits to proton translocation. Its function is as follows. This protein is part of the stalk that links CF(0) to CF(1). It either transmits conformational changes from CF(0) to CF(1) or is implicated in proton conduction. This Microcystis aeruginosa (strain NIES-843 / IAM M-2473) protein is ATP synthase subunit delta.